The following is a 391-amino-acid chain: MFLNSLDLPGPPENSRVVVAMSGGVDSSVVAGLLKREGYDVVGITLQLYDHGAATHRAGACCAGQDIEDARRVAETLRIPYYVLDYESRFREAVIDPFAESYARGETPIPCVACNQTVKFADLLVTARELGADALATGHYIRSVSYGTHRALFRPLDSERDQSYFLFATTQEQIDYLRFPLGNLPKARVREIAKEMGLTVADKHDSQDICFVPQGKYSDVIAKLRPEASNPGDIVHINGQILGQHSGIINYTVGQRRGIGVATGEALYVIFLDVENARVIVGPREMLETHKLFLRDVNWLGDERLENFPSDCIDVAAKIRSTRPPRPARLYYKEGIFSVDLLEGESSVAPGQACVFYNESGDGARVLGGGFITHSERSTDAEERLQRVLHN.

Residues 20-27 (AMSGGVDS) and L46 contribute to the ATP site. C114 (nucleophile) is an active-site residue. A disulfide bridge links C114 with C210. An ATP-binding site is contributed by G138. The interaction with tRNA stretch occupies residues 160 to 162 (RDQ). C210 functions as the Cysteine persulfide intermediate in the catalytic mechanism.

The protein belongs to the MnmA/TRMU family.

Its subcellular location is the cytoplasm. The catalysed reaction is S-sulfanyl-L-cysteinyl-[protein] + uridine(34) in tRNA + AH2 + ATP = 2-thiouridine(34) in tRNA + L-cysteinyl-[protein] + A + AMP + diphosphate + H(+). Functionally, catalyzes the 2-thiolation of uridine at the wobble position (U34) of tRNA, leading to the formation of s(2)U34. The sequence is that of tRNA-specific 2-thiouridylase MnmA from Bartonella bacilliformis (strain ATCC 35685 / KC583 / Herrer 020/F12,63).